The following is a 354-amino-acid chain: 5,10-methenyltetrahydromethanopterin hydrogenase (354 aa).

Belongs to the HMD family.

The enzyme catalyses 5,10-methenyl-5,6,7,8-tetrahydromethanopterin + H2 = 5,10-methylenetetrahydromethanopterin + H(+). Its pathway is one-carbon metabolism; methanogenesis from CO(2); 5,10-methylene-5,6,7,8-tetrahydromethanopterin from 5,10-methenyl-5,6,7,8-tetrahydromethanopterin (hydrogen route): step 1/1. Functionally, catalyzes the reversible reduction of methenyl-H(4)MPT(+) to methylene-H(4)MPT. The protein is 5,10-methenyltetrahydromethanopterin hydrogenase of Methanococcus maripaludis (strain C5 / ATCC BAA-1333).